The following is a 685-amino-acid chain: Multicopper oxidase VdtB (685 aa).

The first 17 residues, 1–17 (MPAYLLLLACNVLLVLG), serve as a signal peptide directing secretion. Plastocyanin-like domains lie at 26–139 (LTWE…IRRK) and 168–368 (IMML…RYKN). N71 is a glycosylation site (N-linked (GlcNAc...) asparagine). Cu cation is bound by residues H75, H77, H119, and H121. 5 N-linked (GlcNAc...) asparagine glycosylation sites follow: N178, N229, N253, N432, and N475. Positions 466–585 (DDDLIIRTQN…DNGMAMAILD (120 aa)) constitute a Plastocyanin-like 3 domain. H500 contacts Cu cation. N517 carries N-linked (GlcNAc...) asparagine glycosylation. The chain crosses the membrane as a helical span at residues 627-647 (SLVWAGGAAVVLLSLFIGGLW).

The protein belongs to the multicopper oxidase family.

Its subcellular location is the membrane. The catalysed reaction is 4 semiviriditoxin + O2 = 2 (M)-viriditoxin + 2 H2O. It participates in secondary metabolite biosynthesis. Functionally, multicopper oxidase; part of the gene cluster that mediates the biosynthesis of viriditoxin, one of the 'classical' secondary metabolites produced by fungi and that has antibacterial activity. The first step is performed by the polyketide synthase VdtA which condenses one acetyl-CoA and 6 malonyl-CoA units to form the heptaketide monomer backbone of viriditoxin. The product of VdtA is then O-methylated on C7 by the O-methyltransferase VdtC. The O-methyl group is important for the stereoselective coupling of the monomers at the final step of viriditoxin biosynthesis. The short-chain dehydrogenase/reductase VdtF then acts as a stereospecific reductase converting the pyrone to dihydropyrone via the reduction of the C3-C4 double bond. The FAD-binding monooxygenase VdtE then converts the ketone group into a methyl-ester group to yield semi-viriditoxin. Finally, the laccase VdtB is involved in dimerization of 2 semi-viriditoxin molecules to yield the final viriditoxin. VdtB is responsible for the regioselective 6,6'-coupling of semi-viriditoxin, which yields (M)-viriditoxin and (P)-viriditoxin at a ratio of 1:2. The non-catalytic carboxylesterase-like protein VdtD affects the stereochemistical outcome of the coupling. The highly reducing polyketide synthase VdtX is not involved in viriditoxin synthesis, but might possibly play a role in the production of additional metabolites not identified yet. The protein is Multicopper oxidase VdtB of Byssochlamys spectabilis (Paecilomyces variotii).